Consider the following 154-residue polypeptide: Low molecular weight protein-tyrosine-phosphatase PtpA (154 aa).

The active-site Nucleophile is C8. R14 is an active-site residue. D120 (proton donor) is an active-site residue.

Belongs to the low molecular weight phosphotyrosine protein phosphatase family. Interacts with host CORO1A. In terms of processing, phosphorylations at Tyr-122 and Tyr-123 are essential for phosphatase activity.

The protein resides in the secreted. The catalysed reaction is O-phospho-L-tyrosyl-[protein] + H2O = L-tyrosyl-[protein] + phosphate. Functionally, secreted tyrosine phosphatase that plays a critical role during infection as a bacterial effector protein that counteracts host defenses. Required for intramacrophage survival. This is Low molecular weight protein-tyrosine-phosphatase PtpA (ptpA) from Staphylococcus aureus (strain MRSA252).